A 336-amino-acid polypeptide reads, in one-letter code: Torsin-1B (336 aa).

An N-terminal signal peptide occupies residues 1 to 24; the sequence is MLRAGWLRGAAALALLLAARVVAA. Asparagine 64 is a glycosylation site (N-linked (GlcNAc...) asparagine). 109–116 is an ATP binding site; the sequence is GWAGTGKN. Asparagine 165 carries an N-linked (GlcNAc...) asparagine glycan.

Belongs to the ClpA/ClpB family. Torsin subfamily. As to quaternary structure, homohexamer. Interacts with TOR1A; the interaction may be specific of neural tissues. Interacts with TOR1AIP1; TOR1AIP1 is required for TOR1B location on the nuclear membrane. Interacts (ATP-bound) with TOR1AIP2; important for endoplasmic reticulum integrity. N-glycosylated. Widely expressed with low levels in brain.

The protein resides in the endoplasmic reticulum lumen. It is found in the nucleus membrane. The enzyme catalyses ATP + H2O = ADP + phosphate + H(+). May serve as a molecular chaperone assisting in the proper folding of secreted and/or membrane proteins. Plays a role in non-neural cells nuclear envelope and endoplasmic reticulum integrity. May have a redundant function with TOR1A in non-neural tissues. The polypeptide is Torsin-1B (TOR1B) (Homo sapiens (Human)).